The following is an 808-amino-acid chain: Probable E3 ubiquitin-protein ligase hulA (808 aa).

The C2 domain occupies Met1 to Arg112. 2 disordered regions span residues Asn134–Arg231 and Arg275–Asp346. Polar residues-rich tracts occupy residues Gln142–Leu159 and Gly171–Thr198. The span at Val199–Ala210 shows a compositional bias: low complexity. Residues Ser211 to Asp220 show a composition bias toward polar residues. The 34-residue stretch at Gly223–Ser256 folds into the WW 1 domain. Over residues Arg275–Thr288 the composition is skewed to basic and acidic residues. Over residues Gly289 to Thr303 the composition is skewed to polar residues. Low complexity predominate over residues Ala317–Gly326. 2 consecutive WW domains span residues Gly326 to Arg359 and Gly386 to Leu419. One can recognise an HECT domain in the interval Ser475–Glu808. Cys776 functions as the Glycyl thioester intermediate in the catalytic mechanism.

The protein belongs to the RSP5/NEDD4 family. As to quaternary structure, interacts with creD.

The protein localises to the cytoplasm. It carries out the reaction S-ubiquitinyl-[E2 ubiquitin-conjugating enzyme]-L-cysteine + [acceptor protein]-L-lysine = [E2 ubiquitin-conjugating enzyme]-L-cysteine + N(6)-ubiquitinyl-[acceptor protein]-L-lysine.. It participates in protein modification; protein ubiquitination. Functionally, E3 ubiquitin-protein ligase which accepts ubiquitin from an E2 ubiquitin-conjugating enzyme in the form of a thioester and then directly transfers the ubiquitin to targeted substrates. Probably involved in the regulatory network controlling carbon source utilization. The polypeptide is Probable E3 ubiquitin-protein ligase hulA (hulA) (Aspergillus terreus (strain NIH 2624 / FGSC A1156)).